Consider the following 101-residue polypeptide: NAD(P)H-quinone oxidoreductase subunit 4L, chloroplastic (101 aa).

3 consecutive transmembrane segments (helical) span residues 2-22, 32-52, and 61-81; these read MLEHVLVLSAYLFSIGIYGLI, MCLELILNAVNINFVTFSDFF, and IFSIFVIAIAAAEAAIGPAIV.

The protein belongs to the complex I subunit 4L family. As to quaternary structure, NDH is composed of at least 16 different subunits, 5 of which are encoded in the nucleus.

The protein resides in the plastid. It is found in the chloroplast thylakoid membrane. The catalysed reaction is a plastoquinone + NADH + (n+1) H(+)(in) = a plastoquinol + NAD(+) + n H(+)(out). It carries out the reaction a plastoquinone + NADPH + (n+1) H(+)(in) = a plastoquinol + NADP(+) + n H(+)(out). In terms of biological role, NDH shuttles electrons from NAD(P)H:plastoquinone, via FMN and iron-sulfur (Fe-S) centers, to quinones in the photosynthetic chain and possibly in a chloroplast respiratory chain. The immediate electron acceptor for the enzyme in this species is believed to be plastoquinone. Couples the redox reaction to proton translocation, and thus conserves the redox energy in a proton gradient. The chain is NAD(P)H-quinone oxidoreductase subunit 4L, chloroplastic from Vitis vinifera (Grape).